Reading from the N-terminus, the 313-residue chain is Ribosomal RNA small subunit methyltransferase H (313 aa).

Residues 35–37, aspartate 55, phenylalanine 79, aspartate 101, and glutamine 108 contribute to the S-adenosyl-L-methionine site; that span reads GGH.

Belongs to the methyltransferase superfamily. RsmH family.

The protein localises to the cytoplasm. The catalysed reaction is cytidine(1402) in 16S rRNA + S-adenosyl-L-methionine = N(4)-methylcytidine(1402) in 16S rRNA + S-adenosyl-L-homocysteine + H(+). Its function is as follows. Specifically methylates the N4 position of cytidine in position 1402 (C1402) of 16S rRNA. The polypeptide is Ribosomal RNA small subunit methyltransferase H (Shigella flexneri serotype 5b (strain 8401)).